The primary structure comprises 359 residues: Histidinol-phosphate aminotransferase (359 aa).

The residue at position 217 (Lys-217) is an N6-(pyridoxal phosphate)lysine.

This sequence belongs to the class-II pyridoxal-phosphate-dependent aminotransferase family. Histidinol-phosphate aminotransferase subfamily. Homodimer. The cofactor is pyridoxal 5'-phosphate.

The enzyme catalyses L-histidinol phosphate + 2-oxoglutarate = 3-(imidazol-4-yl)-2-oxopropyl phosphate + L-glutamate. It functions in the pathway amino-acid biosynthesis; L-histidine biosynthesis; L-histidine from 5-phospho-alpha-D-ribose 1-diphosphate: step 7/9. This Salmonella typhi protein is Histidinol-phosphate aminotransferase.